The sequence spans 494 residues: Glycosyl hydrolase family 109 protein (494 aa).

2 disordered regions span residues 1-35 (MNDA…LRTT) and 59-86 (EAAQ…MAGV). The segment at residues 1–55 (MNDAAPQNPGQDEAKGTGEKDNGGSMSPRSALRTTAGVAGAGLGLSALGTGTASA) is a signal peptide (tat-type signal). The segment covering 12–22 (DEAKGTGEKDN) has biased composition (basic and acidic residues). Residues 103-104 (NR), Asp-125, 174-177 (WDFH), 194-195 (EC), and Asn-223 contribute to the NAD(+) site. Substrate is bound by residues Tyr-252, Arg-271, 283-286 (YPNH), and Tyr-365. Tyr-283 lines the NAD(+) pocket. Positions 463–494 (KANGKPQQIPDFTRGEWKKSRPGTDSEKPSEP) are disordered. A compositionally biased stretch (basic and acidic residues) spans 475–494 (TRGEWKKSRPGTDSEKPSEP).

Belongs to the Gfo/Idh/MocA family. Glycosyl hydrolase 109 subfamily. NAD(+) serves as cofactor. Predicted to be exported by the Tat system. The position of the signal peptide cleavage has not been experimentally proven.

In terms of biological role, glycosidase. The polypeptide is Glycosyl hydrolase family 109 protein (Streptomyces niveus (Streptomyces spheroides)).